Consider the following 330-residue polypeptide: Uracil-DNA glycosylase, mitochondrial (330 aa).

The transit peptide at 1 to 49 (MASSTPKTLMDFFQPAKRLKASPSSSSFPAVSVAGGSRDLGSVANSPPR) directs the protein to the mitochondrion. D173 functions as the Proton acceptor in the catalytic mechanism.

It belongs to the uracil-DNA glycosylase (UDG) superfamily. UNG family.

It localises to the mitochondrion. It carries out the reaction Hydrolyzes single-stranded DNA or mismatched double-stranded DNA and polynucleotides, releasing free uracil.. With respect to regulation, inhidited by the small peptide uracil-DNA-glycosylase inhibitor (Ugi). In terms of biological role, excises uracil residues from the DNA which can arise as a result of misincorporation of dUMP residues by DNA polymerase or due to deamination of cytosine. More active on U:G, U:T and U:C mispairs than on U:A pairs. Highly specific for uracil and no activity with 5-substituted uracil or cytosine derivatives. Required for initiation of base excision repair (BER) of uracil. The protein is Uracil-DNA glycosylase, mitochondrial of Arabidopsis thaliana (Mouse-ear cress).